The primary structure comprises 720 residues: Mitogen-activated protein kinase 6 (720 aa).

Met1 participates in a covalent cross-link: Peptide (Met-Gly) (interchain with G-Cter in ubiquitin). Residues 20-316 (YMDLKPLGCG…AEEALSHPYM (297 aa)) form the Protein kinase domain. Residues 26 to 34 (LGCGGNGLV) and Lys49 each bind ATP. Asp152 serves as the catalytic Proton acceptor. Ser189 is modified (phosphoserine; by PAK1, PAK2 and PAK3). The short motif at 189–191 (SEG) is the SEG motif element. Positions 332–337 (FHIEDE) match the FRIEDE motif motif. 3 positions are modified to phosphoserine: Ser386, Ser554, and Ser556. The disordered stretch occupies residues 638-657 (SEMLETEPVEEGKRGERGRE). A compositionally biased stretch (basic and acidic residues) spans 647–657 (EEGKRGERGRE). Ser683 carries the post-translational modification Phosphoserine. The span at 700–714 (AMKSSPQIPHKTYSS) shows a compositional bias: polar residues. Residues 700–720 (AMKSSPQIPHKTYSSILKHLN) form a disordered region.

This sequence belongs to the protein kinase superfamily. CMGC Ser/Thr protein kinase family. MAP kinase subfamily. In terms of assembly, heterodimer with ERK4/MAPK4. Interacts with (via FRIEDE motif) MAPKAPK5. Interacts with UBE3A; this interaction may be indirect and mediated by HERC2, possibly via HERC2 interaction with NEURL4. The cofactor is Mg(2+). In terms of processing, phosphorylated at Ser-189 by PAK1, PAK2 and PAK3 resulting in catalytic activation. Phosphorylated by MAPKAPK5 at other sites. Ubiquitination at Met-1 leads to degradation by the proteasome pathway.

The protein localises to the cytoplasm. The protein resides in the nucleus. The catalysed reaction is L-seryl-[protein] + ATP = O-phospho-L-seryl-[protein] + ADP + H(+). It carries out the reaction L-threonyl-[protein] + ATP = O-phospho-L-threonyl-[protein] + ADP + H(+). With respect to regulation, activated by phosphorylation at Ser-189. Its function is as follows. Atypical MAPK protein. Phosphorylates microtubule-associated protein 2 (MAP2) and MAPKAPK5. The precise role of the complex formed with MAPKAPK5 is still unclear, but the complex follows a complex set of phosphorylation events: upon interaction with atypical MAPKAPK5, ERK3/MAPK6 is phosphorylated at Ser-189 and then mediates phosphorylation and activation of MAPKAPK5, which in turn phosphorylates ERK3/MAPK6. May promote entry in the cell cycle. The sequence is that of Mitogen-activated protein kinase 6 (Mapk6) from Mus musculus (Mouse).